The primary structure comprises 417 residues: Phosphoribosylamine--glycine ligase (417 aa).

Positions 108 to 307 constitute an ATP-grasp domain; the sequence is KRIMDEAGVP…LSTLLFAAAT (200 aa). An ATP-binding site is contributed by 134–188; it reads LDEFGAPYVVKADGLAAGKGVIVTEDRAAALAHAARYLTHGSVLVEEFLDGEEVS. Mg(2+)-binding residues include glutamate 277 and asparagine 279.

It belongs to the GARS family. Mg(2+) serves as cofactor. Requires Mn(2+) as cofactor.

It carries out the reaction 5-phospho-beta-D-ribosylamine + glycine + ATP = N(1)-(5-phospho-beta-D-ribosyl)glycinamide + ADP + phosphate + H(+). The protein operates within purine metabolism; IMP biosynthesis via de novo pathway; N(1)-(5-phospho-D-ribosyl)glycinamide from 5-phospho-alpha-D-ribose 1-diphosphate: step 2/2. In Leifsonia xyli subsp. xyli (strain CTCB07), this protein is Phosphoribosylamine--glycine ligase.